A 204-amino-acid polypeptide reads, in one-letter code: MKYTFLAVLSAVTVLATPAPVPTPPNIPSASTAQSLLSGLTVRPQGPQDGYSRDKFPHWITISGTCNTRETVLRRDGTNVQVDGSCAATSGSWFSPYDGATWTAASDVDIDHVVPLSNAWKSGAASWTTSQRQSFANDLSNPQLIAVTDNVNQAKGDQGPESWKPPLQSYWCTYSRMWIKVKSVYDLSVTSAEKSALTSMLNTC.

A signal peptide spans 1-16 (MKYTFLAVLSAVTVLA).

It is found in the secreted. This is an uncharacterized protein from Arthroderma benhamiae (strain ATCC MYA-4681 / CBS 112371) (Trichophyton mentagrophytes).